The following is a 98-amino-acid chain: Ig heavy chain V region 6.96 (98 aa).

Positions 1-98 (EVQLVESGGG…EDTAMYYCAR (98 aa)) constitute an Ig-like domain.

This chain is Ig heavy chain V region 6.96, found in Mus musculus (Mouse).